A 361-amino-acid polypeptide reads, in one-letter code: Chorismate synthase (361 aa).

NADP(+) is bound by residues Arg-48 and Arg-54. FMN is bound by residues 125–127, 238–239, Gly-278, 293–297, and Arg-319; these read RSS, NA, and KPTSS.

Belongs to the chorismate synthase family. In terms of assembly, homotetramer. FMNH2 is required as a cofactor.

The catalysed reaction is 5-O-(1-carboxyvinyl)-3-phosphoshikimate = chorismate + phosphate. It functions in the pathway metabolic intermediate biosynthesis; chorismate biosynthesis; chorismate from D-erythrose 4-phosphate and phosphoenolpyruvate: step 7/7. Catalyzes the anti-1,4-elimination of the C-3 phosphate and the C-6 proR hydrogen from 5-enolpyruvylshikimate-3-phosphate (EPSP) to yield chorismate, which is the branch point compound that serves as the starting substrate for the three terminal pathways of aromatic amino acid biosynthesis. This reaction introduces a second double bond into the aromatic ring system. The protein is Chorismate synthase of Salmonella dublin (strain CT_02021853).